We begin with the raw amino-acid sequence, 442 residues long: tRNA modification GTPase MnmE (442 aa).

Positions 27, 84, and 124 each coordinate (6S)-5-formyl-5,6,7,8-tetrahydrofolate. The region spanning 221 to 366 is the TrmE-type G domain; sequence GLHVVIVGAP…LLDALQAFAE (146 aa). Residues 231 to 236, 250 to 256, and 275 to 278 contribute to the GTP site; these read NAGKSS, SEEAGTT, and DTAG. Mg(2+) is bound by residues Ser235 and Thr256. Lys442 is a (6S)-5-formyl-5,6,7,8-tetrahydrofolate binding site.

The protein belongs to the TRAFAC class TrmE-Era-EngA-EngB-Septin-like GTPase superfamily. TrmE GTPase family. As to quaternary structure, homodimer. Heterotetramer of two MnmE and two MnmG subunits. The cofactor is K(+).

It localises to the cytoplasm. Exhibits a very high intrinsic GTPase hydrolysis rate. Involved in the addition of a carboxymethylaminomethyl (cmnm) group at the wobble position (U34) of certain tRNAs, forming tRNA-cmnm(5)s(2)U34. The polypeptide is tRNA modification GTPase MnmE (Brucella abortus (strain 2308)).